Consider the following 143-residue polypeptide: Mediator of RNA polymerase II transcription subunit 9 (143 aa).

Residues 84–141 are a coiled coil; sequence QDCNHKIFELQKRFESAREQIRQLPGIDYNKDEQLQRLELLRNQFKLKQQLIRKYKDT.

This sequence belongs to the Mediator complex subunit 9 family. Component of the Mediator complex.

The protein localises to the nucleus. Functionally, component of the Mediator complex, a coactivator involved in the regulated transcription of nearly all RNA polymerase II-dependent genes. Mediator functions as a bridge to convey information from gene-specific regulatory proteins to the basal RNA polymerase II transcription machinery. Mediator is recruited to promoters by direct interactions with regulatory proteins and serves as a scaffold for the assembly of a functional preinitiation complex with RNA polymerase II and the general transcription factors. The sequence is that of Mediator of RNA polymerase II transcription subunit 9 (MED9) from Drosophila pseudoobscura pseudoobscura (Fruit fly).